Consider the following 611-residue polypeptide: Fatty acid photodecarboxylase, chloroplastic (611 aa).

The tract at residues 1–22 (MMLGPKTVTRGATKGAAPRSMA) is disordered. A chloroplast-targeting transit peptide spans 1–36 (MMLGPKTVTRGATKGAAPRSMAARRVGGARRLSVRA). Residues 55–56 (TA), glutamate 76, methionine 125, serine 129, and 133–136 (NATL) contribute to the FAD site. Positions 392, 412, 427, and 447 each coordinate hexadecanoate. Glycine 582 lines the FAD pocket.

This sequence belongs to the GMC oxidoreductase family. FAD serves as cofactor.

Its subcellular location is the plastid. The protein resides in the chloroplast. It carries out the reaction a long-chain fatty acid + hnu + H(+) = a long-chain alkane + CO2. The catalysed reaction is hnu + hexadecanoate + H(+) = pentadecane + CO2. With respect to regulation, activated by blue light and repressed by red light. In terms of biological role, catalyzes the decarboxylation of free fatty acids to n-alkanes or n-alkenes in response to blue light. Substrate preference is toward fatty acids with C17 or C18 chains. Saturated fatty acids are converted to alkanes, not alkenes. The decarboxylation is initiated through electron abstraction from the fatty acid by the photo-excited FAD. In Chlamydomonas reinhardtii (Chlamydomonas smithii), this protein is Fatty acid photodecarboxylase, chloroplastic.